Reading from the N-terminus, the 624-residue chain is Chaperone protein HtpG (624 aa).

The segment at methionine 1–arginine 336 is a; substrate-binding. Residues glutamate 337–lysine 552 form a b region. Positions leucine 553–serine 624 are c.

Belongs to the heat shock protein 90 family. As to quaternary structure, homodimer.

It is found in the cytoplasm. Its function is as follows. Molecular chaperone. Has ATPase activity. In Escherichia coli O139:H28 (strain E24377A / ETEC), this protein is Chaperone protein HtpG.